The chain runs to 189 residues: Mitochondrial FAD-linked sulfhydryl oxidase ERV1 (189 aa).

The region spanning 83–183 (DPPDVEQLGR…FDCNFWEKRW (101 aa)) is the ERV/ALR sulfhydryl oxidase domain. FAD contacts are provided by residues 88–95 (EQLGRSSW), H99, and Y128. 2 disulfides stabilise this stretch: C130/C133 and C159/C176. FAD-binding positions include 159-171 (CEAH…KLRK) and 182-183 (RW).

In terms of assembly, homodimer. Interacts with MIA40, forming transient intermolecular disulfide bridges. The cofactor is FAD.

The protein resides in the mitochondrion intermembrane space. The catalysed reaction is 2 R'C(R)SH + O2 = R'C(R)S-S(R)CR' + H2O2. FAD-dependent sulfhydryl oxidase that catalyzes disulfide bond formation. Required for the import and folding of small cysteine-containing proteins in the mitochondrial intermembrane space (IMS). Forms a redox cycle with MIA40 that involves a disulfide relay system. Important for maintaining the cysteine residues in MIA40 in an oxidized state. Reduced ERV1 is reoxidized by cytochrome c. Required for the maturation of cytoplasmic, but not of mitochondrial Fe/S proteins. This is Mitochondrial FAD-linked sulfhydryl oxidase ERV1 (ERV1) from Saccharomyces cerevisiae (strain ATCC 204508 / S288c) (Baker's yeast).